Reading from the N-terminus, the 1125-residue chain is Angiopoietin-1 receptor (1125 aa).

An N-terminal signal peptide occupies residues 1 to 22 (MDSLAGLVLCGVSLLLSATVDG). The Extracellular segment spans residues 23–748 (AMDLILINSL…PADLGGRKML (726 aa)). C44 and C102 form a disulfide bridge. The Ig-like C2-type 1 domain maps to 44–123 (CIASGWRPHE…RTMKMRQQAS (80 aa)). N158 carries N-linked (GlcNAc...) asparagine glycosylation. EGF-like domains lie at 210–252 (RCEA…RTCE), 254–299 (ACEP…LQCN), and 301–341 (ACQP…LQCE). Cystine bridges form between C211–C220, C224–C233, C227–C240, C242–C251, C255–C264, C268–C274, C280–C287, C289–C298, C302–C311, C315–C323, C317–C329, C331–C340, and C370–C424. The Ig-like C2-type 2 domain maps to 350-440 (PKIEDLPDHI…GMVEKPFNIS (91 aa)). 3 Fibronectin type-III domains span residues 447 to 541 (PLNA…TASI), 545 to 637 (PPRG…TLSD), and 642 to 735 (QPEN…TLSE). A helical membrane pass occupies residues 749–769 (LIAILGSAGMTCLTVLLAFLI). At 770–1125 (MLQLKRANVQ…GIDCSAEEAA (356 aa)) the chain is on the cytoplasmic side. The Protein kinase domain maps to 825 to 1097 (IKFQDVIGEG…QILVSLNRML (273 aa)). ATP is bound by residues 831 to 839 (IGEGNFGQV) and K856. Y861 carries the phosphotyrosine; by autocatalysis modification. Residue D965 is the Proton acceptor of the active site. 3 positions are modified to phosphotyrosine; by autocatalysis: Y993, Y1103, and Y1109.

The protein belongs to the protein kinase superfamily. Tyr protein kinase family. Tie subfamily. As to quaternary structure, homodimer. Heterodimer with TIE1. Interacts with ANGPT1, ANGPT2 and ANGPT4. At cell-cell contacts in quiescent cells, forms a signaling complex composed of ANGPT1 plus TEK molecules from two adjoining cells. In the absence of endothelial cell-cell contacts, interaction with ANGPT1 mediates contacts with the extracellular matrix. Interacts (tyrosine phosphorylated) with TNIP2. Interacts (tyrosine phosphorylated) with SHC1 (via SH2 domain). Interacts with PTPRB; this promotes endothelial cell-cell adhesion. Interacts with DOK2, GRB2, GRB7, GRB14, PIK3R1 and PTPN11/SHP2. Colocalizes with DOK2 at contacts with the extracellular matrix in migrating cells. In terms of processing, proteolytic processing leads to the shedding of the extracellular domain (soluble TIE-2 alias sTIE-2). Autophosphorylated on tyrosine residues in response to ligand binding. Autophosphorylation occurs in trans, i.e. one subunit of the dimeric receptor phosphorylates tyrosine residues on the other subunit. Autophosphorylation occurs in a sequential manner, where Tyr-993 in the kinase activation loop is phosphorylated first, followed by autophosphorylation at Tyr-1109 and at additional tyrosine residues. ANGPT1-induced phosphorylation is impaired during hypoxia, due to increased expression of ANGPT2. Phosphorylation is important for interaction with GRB14, PIK3R1 and PTPN11. Phosphorylation at Tyr-1103 is important for interaction with GRB2 and GRB7. Phosphorylation at Tyr-1109 is important for interaction with DOK2 and for coupling to downstream signal transduction pathways in endothelial cells. Dephosphorylated by PTPRB. Post-translationally, ubiquitinated. The phosphorylated receptor is ubiquitinated and internalized, leading to its degradation. Specifically expressed in developing vascular endothelial cells.

The protein resides in the cell membrane. The protein localises to the cell junction. It localises to the focal adhesion. It is found in the cytoplasm. Its subcellular location is the cytoskeleton. The protein resides in the secreted. The catalysed reaction is L-tyrosyl-[protein] + ATP = O-phospho-L-tyrosyl-[protein] + ADP + H(+). Its activity is regulated as follows. Angiopoietin binding leads to receptor dimerization and activation by autophosphorylation at Tyr-993 on the kinase activation loop. Functionally, tyrosine-protein kinase that acts as a cell-surface receptor for ANGPT1, ANGPT2 and ANGPT4 and regulates angiogenesis, endothelial cell survival, proliferation, migration, adhesion and cell spreading, reorganization of the actin cytoskeleton, but also maintenance of vascular quiescence. Has anti-inflammatory effects by preventing the leakage of pro-inflammatory plasma proteins and leukocytes from blood vessels. Required for normal angiogenesis and heart development during embryogenesis. Required for post-natal hematopoiesis. After birth, activates or inhibits angiogenesis, depending on the context. Inhibits angiogenesis and promotes vascular stability in quiescent vessels, where endothelial cells have tight contacts. In quiescent vessels, ANGPT1 oligomers recruit TEK to cell-cell contacts, forming complexes with TEK molecules from adjoining cells, and this leads to preferential activation of phosphatidylinositol 3-kinase and the AKT1 signaling cascades. In migrating endothelial cells that lack cell-cell adhesions, ANGT1 recruits TEK to contacts with the extracellular matrix, leading to the formation of focal adhesion complexes, activation of PTK2/FAK and of the downstream kinases MAPK1/ERK2 and MAPK3/ERK1, and ultimately to the stimulation of sprouting angiogenesis. ANGPT1 signaling triggers receptor dimerization and autophosphorylation at specific tyrosine residues that then serve as binding sites for scaffold proteins and effectors. Signaling is modulated by ANGPT2 that has lower affinity for TEK, can promote TEK autophosphorylation in the absence of ANGPT1, but inhibits ANGPT1-mediated signaling by competing for the same binding site. Signaling is also modulated by formation of heterodimers with TIE1, and by proteolytic processing that gives rise to a soluble TEK extracellular domain. The soluble extracellular domain modulates signaling by functioning as decoy receptor for angiopoietins. TEK phosphorylates DOK2, GRB7, GRB14, PIK3R1, SHC1 and TIE1. This chain is Angiopoietin-1 receptor (TEK), found in Bos taurus (Bovine).